The following is a 159-amino-acid chain: Large ribosomal subunit protein uL11 (159 aa).

The protein belongs to the universal ribosomal protein uL11 family. In terms of assembly, part of the ribosomal stalk of the 50S ribosomal subunit. Interacts with L10 and the large rRNA to form the base of the stalk. L10 forms an elongated spine to which L12 dimers bind in a sequential fashion forming a multimeric L10(L12)X complex.

Forms part of the ribosomal stalk which helps the ribosome interact with GTP-bound translation factors. This chain is Large ribosomal subunit protein uL11, found in Methanococcus vannielii (strain ATCC 35089 / DSM 1224 / JCM 13029 / OCM 148 / SB).